A 259-amino-acid chain; its full sequence is Ribonuclease T2-B (259 aa).

An N-terminal signal peptide occupies residues 1–29 (MAPAEARGALPGWISVLGWGLALCSLCGA). A disulfide bridge links cysteine 53 with cysteine 59. Histidine 69 is an active-site residue. Cystine bridges form between cysteine 79–cysteine 125, cysteine 188–cysteine 244, and cysteine 206–cysteine 217. Asparagine 80 and asparagine 110 each carry an N-linked (GlcNAc...) asparagine glycan. Active-site residues include glutamate 118 and histidine 122. Residue asparagine 216 is glycosylated (N-linked (GlcNAc...) asparagine).

It belongs to the RNase T2 family.

It is found in the secreted. The protein localises to the lysosome lumen. It localises to the endoplasmic reticulum lumen. Its subcellular location is the mitochondrion intermembrane space. It carries out the reaction a ribonucleotidyl-ribonucleotide-RNA + H2O = a 3'-end 3'-phospho-ribonucleotide-RNA + a 5'-end dephospho-ribonucleoside-RNA + H(+). It catalyses the reaction an adenylyl-uridine-RNA = a 3'-end 2',3'-cyclophospho-AMP-RNA + a 5'-end dephospho-uridine-RNA. The enzyme catalyses a guanylyl-uridine-RNA = a 3'-end 2',3'-cyclophospho-GMP-RNA + a 5'-end dephospho-uridine-RNA. With respect to regulation, inhibited by Zn(2+) and Cu(2+). Its function is as follows. Ribonuclease that plays an essential role in innate immune response by recognizing and degrading RNAs from microbial pathogens that are subsequently sensed by TLR8. Cleaves preferentially single-stranded RNA molecules between purine and uridine residues, which critically contributes to the supply of catabolic uridine and the generation of purine-2',3'-cyclophosphate-terminated oligoribonucleotides. In turn, RNase T2 degradation products promote the RNA-dependent activation of TLR8. In plasmacytoid dendritic cells, it cooperates with PLD3 or PLD4 5'-&gt;3' exonucleases to process RNA fragments and release 2',3'-cyclic guanosine monophosphate (2',3'-cGMP), a potent stimulatory ligand for TLR7. Also plays a key role in degradation of mitochondrial RNA and processing of non-coding RNA imported from the cytosol into mitochondria. Participates as well in degradation of mitochondrion-associated cytosolic rRNAs. The sequence is that of Ribonuclease T2-B from Mus musculus (Mouse).